The sequence spans 115 residues: U3-lycotoxin-Ls1a (115 aa).

An N-terminal signal peptide occupies residues 1–20 (MKFVLLFGVLLVTLFSYSSA). Residues 21–44 (EMLDDFDQADEDELLSLIEKEEAR) constitute a propeptide that is removed on maturation. 4 disulfides stabilise this stretch: Cys-48/Cys-63, Cys-55/Cys-72, Cys-62/Cys-87, and Cys-74/Cys-85.

It belongs to the neurotoxin 19 (CSTX) family. 01 subfamily. As to expression, expressed by the venom gland.

Its subcellular location is the secreted. The sequence is that of U3-lycotoxin-Ls1a from Lycosa singoriensis (Wolf spider).